We begin with the raw amino-acid sequence, 481 residues long: Calcium uptake protein 1, mitochondrial (481 aa).

The N-terminal 33 residues, 1–33 (MFRLHSLSALAELAVGSRCYHGGSQPTQMKRRL), are a transit peptide targeting the mitochondrion. Residues 58 to 82 (ESPPSVNNPKSELGDKGKNKDEGEV) are disordered. Residues 69 to 82 (ELGDKGKNKDEGEV) show a composition bias toward basic and acidic residues. Residues 101–112 (KKKKRSGFRDRK) form a polybasic region region. Phosphoserine is present on serine 124. The segment at 128–131 (KIFR) is k/R-ring. The EF-hand 1 domain occupies 220–255 (TPQRNFEIAFKMFDLNGDGEVDMEEFEQASCPGNII). Positions 233, 235, 237, 239, and 244 each coordinate Ca(2+). The tract at residues 264 to 268 (RHRDR) is k/R-ring. Positions 413 to 448 (LSDHVCDVVFALFDCDGNGELSNKEFVSIMKQRLMR) constitute an EF-hand 2 domain. Aspartate 426, aspartate 428, asparagine 430, glutamate 432, and glutamate 437 together coordinate Ca(2+). At arginine 460 the chain carries Asymmetric dimethylarginine. The tract at residues 460–470 (RLMQAMWKCAQ) is C-helix region.

It belongs to the MICU1 family. MICU1 subfamily. In terms of assembly, heterodimer; disulfide-linked; heterodimerizes with MICU2 or MICU3. Homodimer; disulfide-linked. Component of the uniplex complex, composed of MCU, EMRE/SMDT1, MICU1 and MICU2 (or MICU3) in a 4:4:1:1 stoichiometry. The composition of calcium sensors within the uniplex complex can differ depending on tissues: a MICU1 homodimer can be present instead of the MICU1-MICU2 heterodimer in skeletal-muscle and kidney. MICU1 is recruited to the uniplex complex by EMRE/SMDT1, and it associates with MCU at low calcium levels, occluding the pore of the MCU channel. Associates with the MICOS complex. Interacts with SLC25A23. Interacts with CHCHD4/MIA40; which introduces the interchain disulfide bond with MICU2. Interacts (when methylated) with UCP2; leading to decrease the calcium sensitivity of MICU1. Post-translationally, phosphorylation at Ser-124 by AKT1 impairs its maturation and stability. In terms of processing, asymmetric dimethylation at Arg-460 by PRMT1 decreases the calcium sensitivity of MICU1 by promoting interaction with UCP2. Degraded by YME1L1 when not complexed as homodimer or heterodimer. Not degraded when complexed as homodimer or heterodimer; the presence of the interchain disulfide bond protecting MICU1 from degradation by YME1L1.

It is found in the mitochondrion intermembrane space. It localises to the mitochondrion inner membrane. Its function is as follows. Calcium sensor of the mitochondrial calcium uniporter (MCU) channel, which senses calcium level via its EF-hand domains. MICU1 and MICU2 (or MICU3) form a disulfide-linked heterodimer that stimulates and inhibits MCU activity, depending on the concentration of calcium. At low calcium levels, MICU1 occludes the pore of the MCU channel, preventing mitochondrial calcium uptake. At higher calcium levels, calcium-binding to MICU1 and MICU2 (or MICU3) induces a conformational change that weakens MCU-MICU1 interactions and moves the MICU1-MICU2 heterodimer away from the pore, allowing calcium permeation through the MCU channel. Also required to protect against manganese toxicity by preventing manganese uptake by MCU: mechanistically, manganese-binding to its EF-hand domains does not induce any conformational change, maintaining MCU pore occlusion. Acts as a regulator of mitochondrial cristae structure independently of its ability to regulate the mitochondrial calcium uniporter channel. Regulates glucose-dependent insulin secretion in pancreatic beta-cells by regulating mitochondrial calcium uptake. Induces T-helper 1-mediated autoreactivity, which is accompanied by the release of IFNG. The polypeptide is Calcium uptake protein 1, mitochondrial (MICU1) (Ailuropoda melanoleuca (Giant panda)).